The chain runs to 433 residues: Signal recognition particle 54 kDa protein (433 aa).

Residues 106-113 (GVEGSGKT), 186-190 (DTAGR), and 244-247 (TKMD) each bind GTP.

Belongs to the GTP-binding SRP family. SRP54 subfamily. Part of the signal recognition particle protein translocation system, which is composed of SRP and FtsY. Archaeal SRP consists of a 7S RNA molecule of 300 nucleotides and two protein subunits: SRP54 and SRP19.

Its subcellular location is the cytoplasm. It catalyses the reaction GTP + H2O = GDP + phosphate + H(+). Functionally, involved in targeting and insertion of nascent membrane proteins into the cytoplasmic membrane. Binds to the hydrophobic signal sequence of the ribosome-nascent chain (RNC) as it emerges from the ribosomes. The SRP-RNC complex is then targeted to the cytoplasmic membrane where it interacts with the SRP receptor FtsY. This chain is Signal recognition particle 54 kDa protein, found in Pyrobaculum aerophilum (strain ATCC 51768 / DSM 7523 / JCM 9630 / CIP 104966 / NBRC 100827 / IM2).